The sequence spans 299 residues: Proline iminopeptidase (299 aa).

An AB hydrolase-1 domain is found at 26-272; that stretch reads VLLLAGGPGF…QFLYCANGSH (247 aa). The Nucleophile role is filled by Ser103. Asp245 is an active-site residue. His272 functions as the Proton donor in the catalytic mechanism.

Belongs to the peptidase S33 family. In terms of assembly, monomer.

It catalyses the reaction Release of N-terminal proline from a peptide.. In terms of biological role, releases the N-terminal proline from various substrates. The chain is Proline iminopeptidase from Chitinophaga pinensis (strain ATCC 43595 / DSM 2588 / LMG 13176 / NBRC 15968 / NCIMB 11800 / UQM 2034).